A 957-amino-acid polypeptide reads, in one-letter code: Glycine dehydrogenase (decarboxylating) (957 aa).

K704 bears the N6-(pyridoxal phosphate)lysine mark.

This sequence belongs to the GcvP family. As to quaternary structure, the glycine cleavage system is composed of four proteins: P, T, L and H. Requires pyridoxal 5'-phosphate as cofactor.

The enzyme catalyses N(6)-[(R)-lipoyl]-L-lysyl-[glycine-cleavage complex H protein] + glycine + H(+) = N(6)-[(R)-S(8)-aminomethyldihydrolipoyl]-L-lysyl-[glycine-cleavage complex H protein] + CO2. The glycine cleavage system catalyzes the degradation of glycine. The P protein binds the alpha-amino group of glycine through its pyridoxal phosphate cofactor; CO(2) is released and the remaining methylamine moiety is then transferred to the lipoamide cofactor of the H protein. The chain is Glycine dehydrogenase (decarboxylating) from Bordetella petrii (strain ATCC BAA-461 / DSM 12804 / CCUG 43448).